Consider the following 424-residue polypeptide: Serine hydroxymethyltransferase (424 aa).

(6S)-5,6,7,8-tetrahydrofolate is bound by residues Leu113 and 117 to 119 (GHL). The residue at position 222 (Lys222) is an N6-(pyridoxal phosphate)lysine. 361-363 (SPF) provides a ligand contact to (6S)-5,6,7,8-tetrahydrofolate.

The protein belongs to the SHMT family. In terms of assembly, homodimer. Pyridoxal 5'-phosphate is required as a cofactor.

It localises to the cytoplasm. It carries out the reaction (6R)-5,10-methylene-5,6,7,8-tetrahydrofolate + glycine + H2O = (6S)-5,6,7,8-tetrahydrofolate + L-serine. Its pathway is one-carbon metabolism; tetrahydrofolate interconversion. The protein operates within amino-acid biosynthesis; glycine biosynthesis; glycine from L-serine: step 1/1. Catalyzes the reversible interconversion of serine and glycine with tetrahydrofolate (THF) serving as the one-carbon carrier. This reaction serves as the major source of one-carbon groups required for the biosynthesis of purines, thymidylate, methionine, and other important biomolecules. Also exhibits THF-independent aldolase activity toward beta-hydroxyamino acids, producing glycine and aldehydes, via a retro-aldol mechanism. The sequence is that of Serine hydroxymethyltransferase from Flavobacterium johnsoniae (strain ATCC 17061 / DSM 2064 / JCM 8514 / BCRC 14874 / CCUG 350202 / NBRC 14942 / NCIMB 11054 / UW101) (Cytophaga johnsonae).